The chain runs to 424 residues: Chitinase CLP (424 aa).

The N-terminal stretch at 1–18 (MSLHLLLAVSLCVALASS) is a signal peptide. The Peptidase A1 domain maps to 43-405 (AATSLYTVPI…DEEKQRLGFS (363 aa)). Residues asparagine 139, asparagine 345, and asparagine 419 are each glycosylated (N-linked (GlcNAc...) asparagine).

This sequence belongs to the peptidase A1 family. In terms of tissue distribution, expressed in roots. Expressed at low levels in leaf sheaths, stems and flowers.

The protein resides in the secreted. It localises to the extracellular space. It is found in the apoplast. It catalyses the reaction Random endo-hydrolysis of N-acetyl-beta-D-glucosaminide (1-&gt;4)-beta-linkages in chitin and chitodextrins.. Its function is as follows. Chitinase that possesses antifungal activity. Inhibits the growth of the fungal pathogen Rhizoctonia solani by degrading the fungal cell wall. Does not possess inhibiting activity against fungal endo-1,4-beta-D-xylanases belonging to glycoside hydrolase family 10 (GH10) and family 11 (GH11). Involved in the regulation of plant growth by regulating the intracellular calcium ion concentration in roots. The polypeptide is Chitinase CLP (Oryza sativa subsp. japonica (Rice)).